Consider the following 290-residue polypeptide: tRNA-cytidine(32) 2-sulfurtransferase (290 aa).

The PP-loop motif signature appears at 66–71 (SGGKDS). [4Fe-4S] cluster contacts are provided by C141, C144, and C232.

Belongs to the TtcA family. In terms of assembly, homodimer. Mg(2+) serves as cofactor. It depends on [4Fe-4S] cluster as a cofactor.

Its subcellular location is the cytoplasm. The enzyme catalyses cytidine(32) in tRNA + S-sulfanyl-L-cysteinyl-[cysteine desulfurase] + AH2 + ATP = 2-thiocytidine(32) in tRNA + L-cysteinyl-[cysteine desulfurase] + A + AMP + diphosphate + H(+). Its pathway is tRNA modification. Functionally, catalyzes the ATP-dependent 2-thiolation of cytidine in position 32 of tRNA, to form 2-thiocytidine (s(2)C32). The sulfur atoms are provided by the cysteine/cysteine desulfurase (IscS) system. In Rhizobium etli (strain ATCC 51251 / DSM 11541 / JCM 21823 / NBRC 15573 / CFN 42), this protein is tRNA-cytidine(32) 2-sulfurtransferase.